The chain runs to 234 residues: Glucosamine-6-phosphate deaminase (234 aa).

The active-site Proton acceptor; for enolization step is Asp62. The active-site For ring-opening step is the Asn128. His130 acts as the Proton acceptor; for ring-opening step in catalysis. The active-site For ring-opening step is Glu135.

The protein belongs to the glucosamine/galactosamine-6-phosphate isomerase family. NagB subfamily.

It catalyses the reaction alpha-D-glucosamine 6-phosphate + H2O = beta-D-fructose 6-phosphate + NH4(+). It participates in amino-sugar metabolism; N-acetylneuraminate degradation; D-fructose 6-phosphate from N-acetylneuraminate: step 5/5. Catalyzes the reversible isomerization-deamination of glucosamine 6-phosphate (GlcN6P) to form fructose 6-phosphate (Fru6P) and ammonium ion. The chain is Glucosamine-6-phosphate deaminase from Streptococcus pyogenes serotype M18 (strain MGAS8232).